The primary structure comprises 317 residues: 2,3-dihydroxyphenylpropionate/2,3-dihydroxicinnamic acid 1,2-dioxygenase 2 (317 aa).

Histidine 115 functions as the Proton donor in the catalytic mechanism. Histidine 179 acts as the Proton acceptor in catalysis.

Belongs to the LigB/MhpB extradiol dioxygenase family. In terms of assembly, homotetramer. Fe(2+) is required as a cofactor.

The catalysed reaction is 3-(2,3-dihydroxyphenyl)propanoate + O2 = (2Z,4E)-2-hydroxy-6-oxonona-2,4-dienedioate + H(+). The enzyme catalyses (2E)-3-(2,3-dihydroxyphenyl)prop-2-enoate + O2 = (2Z,4E,7E)-2-hydroxy-6-oxonona-2,4,7-trienedioate + H(+). It functions in the pathway aromatic compound metabolism; 3-phenylpropanoate degradation. In terms of biological role, catalyzes the non-heme iron(II)-dependent oxidative cleavage of 2,3-dihydroxyphenylpropionic acid and 2,3-dihydroxicinnamic acid into 2-hydroxy-6-ketononadienedioate and 2-hydroxy-6-ketononatrienedioate, respectively. This chain is 2,3-dihydroxyphenylpropionate/2,3-dihydroxicinnamic acid 1,2-dioxygenase 2, found in Dechloromonas aromatica (strain RCB).